Here is a 223-residue protein sequence, read N- to C-terminus: Deoxyribose-phosphate aldolase (223 aa).

Aspartate 91 acts as the Proton donor/acceptor in catalysis. The Schiff-base intermediate with acetaldehyde role is filled by lysine 154. The Proton donor/acceptor role is filled by lysine 183.

The protein belongs to the DeoC/FbaB aldolase family. DeoC type 1 subfamily.

It localises to the cytoplasm. It catalyses the reaction 2-deoxy-D-ribose 5-phosphate = D-glyceraldehyde 3-phosphate + acetaldehyde. Its pathway is carbohydrate degradation; 2-deoxy-D-ribose 1-phosphate degradation; D-glyceraldehyde 3-phosphate and acetaldehyde from 2-deoxy-alpha-D-ribose 1-phosphate: step 2/2. Catalyzes a reversible aldol reaction between acetaldehyde and D-glyceraldehyde 3-phosphate to generate 2-deoxy-D-ribose 5-phosphate. The polypeptide is Deoxyribose-phosphate aldolase (Geobacillus thermodenitrificans (strain NG80-2)).